Here is a 246-residue protein sequence, read N- to C-terminus: Aquaporin AqpM (246 aa).

The Cytoplasmic portion of the chain corresponds to 1-11; that stretch reads MVSLTKRCIAE. The helical transmembrane segment at 12-32 threads the bilayer; the sequence is FIGTFILVFFGAGSAAVTLMI. The Extracellular segment spans residues 33 to 55; that stretch reads ASGGTSPNPFNIGIGLLGGLGDW. The helical transmembrane segment at 56–76 threads the bilayer; that stretch reads VAIGLAFGFAIAASIYALGNI. At 77-103 the chain is on the cytoplasmic side; the sequence is SGCHINPAVTIGLWSVKKFPGREVVPY. An NPA 1 motif is present at residues 82-84; that stretch reads NPA. A helical transmembrane segment spans residues 104 to 124; the sequence is IIAQLLGAAFGSFIFLQCAGI. Over 125–145 the chain is Extracellular; it reads GAATVGGLGATAPFPGISYWQ. The helical transmembrane segment at 146-166 threads the bilayer; that stretch reads AMLAEVVGTFLLMITIMGIAV. Residues 167–172 lie on the Cytoplasmic side of the membrane; the sequence is DERAPK. The chain crosses the membrane as a helical span at residues 173–193; the sequence is GFAGIIIGLTVAGIITTLGNI. At 194 to 217 the chain is on the extracellular side; it reads SGSSLNPARTFGPYLNDMIFAGTN. The NPA 2 signature appears at 199–201; sequence NPA. Residues 218–238 traverse the membrane as a helical segment; that stretch reads LWNYYPIYVIGPIVGAVLAAL. Residues 239–246 lie on the Cytoplasmic side of the membrane; the sequence is TYQYLTSE.

This sequence belongs to the MIP/aquaporin (TC 1.A.8) family. As to quaternary structure, homotetramer.

It is found in the cell membrane. Functionally, channel that permits osmotically driven movement of water in both directions. It mediates rapid entry or exit of water in response to abrupt changes in osmolarity. Also exhibits a transient but reproducible increase in the initial glycerol flux. In Methanothermobacter marburgensis (strain ATCC BAA-927 / DSM 2133 / JCM 14651 / NBRC 100331 / OCM 82 / Marburg) (Methanobacterium thermoautotrophicum), this protein is Aquaporin AqpM (aqpM).